The primary structure comprises 408 residues: Imidazolonepropionase (408 aa).

Residues His-73 and His-75 each coordinate Fe(3+). His-73 and His-75 together coordinate Zn(2+). Arg-82, Tyr-145, and His-178 together coordinate 4-imidazolone-5-propanoate. Residue Tyr-145 participates in N-formimidoyl-L-glutamate binding. His-243 contacts Fe(3+). Zn(2+) is bound at residue His-243. Gln-246 contributes to the 4-imidazolone-5-propanoate binding site. Fe(3+) is bound at residue Asp-318. Asp-318 contributes to the Zn(2+) binding site. N-formimidoyl-L-glutamate-binding residues include Asn-320 and Gly-322. Ser-323 lines the 4-imidazolone-5-propanoate pocket.

It belongs to the metallo-dependent hydrolases superfamily. HutI family. It depends on Zn(2+) as a cofactor. Requires Fe(3+) as cofactor.

Its subcellular location is the cytoplasm. It carries out the reaction 4-imidazolone-5-propanoate + H2O = N-formimidoyl-L-glutamate. The protein operates within amino-acid degradation; L-histidine degradation into L-glutamate; N-formimidoyl-L-glutamate from L-histidine: step 3/3. Catalyzes the hydrolytic cleavage of the carbon-nitrogen bond in imidazolone-5-propanoate to yield N-formimidoyl-L-glutamate. It is the third step in the universal histidine degradation pathway. In Shewanella sp. (strain W3-18-1), this protein is Imidazolonepropionase.